Consider the following 873-residue polypeptide: Alanine--tRNA ligase (873 aa).

Positions 562, 566, 666, and 670 each coordinate Zn(2+).

The protein belongs to the class-II aminoacyl-tRNA synthetase family. Zn(2+) serves as cofactor.

The protein localises to the cytoplasm. The catalysed reaction is tRNA(Ala) + L-alanine + ATP = L-alanyl-tRNA(Ala) + AMP + diphosphate. Its function is as follows. Catalyzes the attachment of alanine to tRNA(Ala) in a two-step reaction: alanine is first activated by ATP to form Ala-AMP and then transferred to the acceptor end of tRNA(Ala). Also edits incorrectly charged Ser-tRNA(Ala) and Gly-tRNA(Ala) via its editing domain. The polypeptide is Alanine--tRNA ligase (Dichelobacter nodosus (strain VCS1703A)).